The primary structure comprises 257 residues: Hydroxyacylglutathione hydrolase (257 aa).

Zn(2+)-binding residues include His54, His56, Asp58, His59, His113, Asp137, and His175.

Belongs to the metallo-beta-lactamase superfamily. Glyoxalase II family. As to quaternary structure, monomer. The cofactor is Zn(2+).

The enzyme catalyses an S-(2-hydroxyacyl)glutathione + H2O = a 2-hydroxy carboxylate + glutathione + H(+). The protein operates within secondary metabolite metabolism; methylglyoxal degradation; (R)-lactate from methylglyoxal: step 2/2. Functionally, thiolesterase that catalyzes the hydrolysis of S-D-lactoyl-glutathione to form glutathione and D-lactic acid. The chain is Hydroxyacylglutathione hydrolase from Rippkaea orientalis (strain PCC 8801 / RF-1) (Cyanothece sp. (strain PCC 8801)).